A 299-amino-acid polypeptide reads, in one-letter code: Bifunctional protein FolD (299 aa).

NADP(+)-binding positions include 166–168 (GRS), S191, and I232.

This sequence belongs to the tetrahydrofolate dehydrogenase/cyclohydrolase family. As to quaternary structure, homodimer.

It carries out the reaction (6R)-5,10-methylene-5,6,7,8-tetrahydrofolate + NADP(+) = (6R)-5,10-methenyltetrahydrofolate + NADPH. The catalysed reaction is (6R)-5,10-methenyltetrahydrofolate + H2O = (6R)-10-formyltetrahydrofolate + H(+). It functions in the pathway one-carbon metabolism; tetrahydrofolate interconversion. Functionally, catalyzes the oxidation of 5,10-methylenetetrahydrofolate to 5,10-methenyltetrahydrofolate and then the hydrolysis of 5,10-methenyltetrahydrofolate to 10-formyltetrahydrofolate. The sequence is that of Bifunctional protein FolD from Anaplasma marginale (strain St. Maries).